The primary structure comprises 491 residues: Cobyric acid synthase (491 aa).

One can recognise a GATase cobBQ-type domain in the interval 250-439 (EVTIAVIRLP…LHGIFDNGAW (190 aa)). The active-site Nucleophile is Cys-331. His-431 is a catalytic residue.

It belongs to the CobB/CobQ family. CobQ subfamily.

Its pathway is cofactor biosynthesis; adenosylcobalamin biosynthesis. Catalyzes amidations at positions B, D, E, and G on adenosylcobyrinic A,C-diamide. NH(2) groups are provided by glutamine, and one molecule of ATP is hydrogenolyzed for each amidation. The polypeptide is Cobyric acid synthase (Synechococcus sp. (strain ATCC 27144 / PCC 6301 / SAUG 1402/1) (Anacystis nidulans)).